A 430-amino-acid polypeptide reads, in one-letter code: Glutamate-1-semialdehyde 2,1-aminomutase (430 aa).

Lys-269 carries the post-translational modification N6-(pyridoxal phosphate)lysine.

Belongs to the class-III pyridoxal-phosphate-dependent aminotransferase family. HemL subfamily. In terms of assembly, homodimer. It depends on pyridoxal 5'-phosphate as a cofactor.

It is found in the cytoplasm. The enzyme catalyses (S)-4-amino-5-oxopentanoate = 5-aminolevulinate. It functions in the pathway porphyrin-containing compound metabolism; protoporphyrin-IX biosynthesis; 5-aminolevulinate from L-glutamyl-tRNA(Glu): step 2/2. The sequence is that of Glutamate-1-semialdehyde 2,1-aminomutase from Desulfitobacterium hafniense (strain Y51).